A 340-amino-acid polypeptide reads, in one-letter code: Ketol-acid reductoisomerase (NADP(+)) (340 aa).

Positions 5–182 (MEYEKDVKVA…GSARVGLLET (178 aa)) constitute a KARI N-terminal Rossmann domain. NADP(+) contacts are provided by residues 26–29 (YGSQ), Arg49, Ser53, and 83–86 (DEIQ). His108 is a catalytic residue. NADP(+) is bound at residue Gly134. Residues 183 to 328 (TYKEETEEDL…AELRKAMPFV (146 aa)) form the KARI C-terminal knotted domain. Positions 191, 195, 227, and 231 each coordinate Mg(2+). Ser252 contacts substrate.

Belongs to the ketol-acid reductoisomerase family. The cofactor is Mg(2+).

It carries out the reaction (2R)-2,3-dihydroxy-3-methylbutanoate + NADP(+) = (2S)-2-acetolactate + NADPH + H(+). The catalysed reaction is (2R,3R)-2,3-dihydroxy-3-methylpentanoate + NADP(+) = (S)-2-ethyl-2-hydroxy-3-oxobutanoate + NADPH + H(+). The protein operates within amino-acid biosynthesis; L-isoleucine biosynthesis; L-isoleucine from 2-oxobutanoate: step 2/4. It functions in the pathway amino-acid biosynthesis; L-valine biosynthesis; L-valine from pyruvate: step 2/4. Functionally, involved in the biosynthesis of branched-chain amino acids (BCAA). Catalyzes an alkyl-migration followed by a ketol-acid reduction of (S)-2-acetolactate (S2AL) to yield (R)-2,3-dihydroxy-isovalerate. In the isomerase reaction, S2AL is rearranged via a Mg-dependent methyl migration to produce 3-hydroxy-3-methyl-2-ketobutyrate (HMKB). In the reductase reaction, this 2-ketoacid undergoes a metal-dependent reduction by NADPH to yield (R)-2,3-dihydroxy-isovalerate. The chain is Ketol-acid reductoisomerase (NADP(+)) from Streptococcus sanguinis (strain SK36).